The primary structure comprises 339 residues: Phosphate acyltransferase (339 aa).

This sequence belongs to the PlsX family. As to quaternary structure, homodimer. Probably interacts with PlsY.

It is found in the cytoplasm. It carries out the reaction a fatty acyl-[ACP] + phosphate = an acyl phosphate + holo-[ACP]. Its pathway is lipid metabolism; phospholipid metabolism. In terms of biological role, catalyzes the reversible formation of acyl-phosphate (acyl-PO(4)) from acyl-[acyl-carrier-protein] (acyl-ACP). This enzyme utilizes acyl-ACP as fatty acyl donor, but not acyl-CoA. The protein is Phosphate acyltransferase of Dechloromonas aromatica (strain RCB).